The chain runs to 230 residues: Large ribosomal subunit protein uL1 (230 aa).

This sequence belongs to the universal ribosomal protein uL1 family. In terms of assembly, part of the 50S ribosomal subunit.

Its function is as follows. Binds directly to 23S rRNA. The L1 stalk is quite mobile in the ribosome, and is involved in E site tRNA release. Protein L1 is also a translational repressor protein, it controls the translation of the L11 operon by binding to its mRNA. In Rhodopseudomonas palustris (strain BisB18), this protein is Large ribosomal subunit protein uL1.